Reading from the N-terminus, the 459-residue chain is MSQSSASSIFTVSRLNQTVRELLEREMGQIWLTAEISNFSQPASGHWYFTLKDDRAQVRCAMFRNSNRRTTFRPQNGQQVLVRASITLYEPRGDYQLIAESMQPAGDGLLQQQFEQLKQQLAAEGLFDQSHKQPLPHPAKQVGVITSASGAALHDVLHVLQRRDPSLPVIIYPTSVQGVDAPLQIVRAIQLANLRAECDVLIVGRGGGSLEDLWSFNDERVARAIFNSHIPIVSAVGHETDVTIADFVADLRAPTPSAAAELVSRNQIELVRQIQGQQQRMEMAMDYYLAQRNQQFTRLEHRLQQQHPHLRLARQQTLLLKLQRRLEESAQTQIRLLSKRTERLQQRLQQVQPQGQIHRYNQRVQQQEYRLRQAVERQLNGYRQRFGIACSQLEAVSPLATLARGYSVTQTPAGALLKTTKQVQAGDKLTTRLQDGWVESEITQVTVAKKSRQKKVVTQ.

This sequence belongs to the XseA family. As to quaternary structure, heterooligomer composed of large and small subunits.

It is found in the cytoplasm. It catalyses the reaction Exonucleolytic cleavage in either 5'- to 3'- or 3'- to 5'-direction to yield nucleoside 5'-phosphates.. Its function is as follows. Bidirectionally degrades single-stranded DNA into large acid-insoluble oligonucleotides, which are then degraded further into small acid-soluble oligonucleotides. The chain is Exodeoxyribonuclease 7 large subunit from Yersinia pestis bv. Antiqua (strain Antiqua).